We begin with the raw amino-acid sequence, 191 residues long: Elongation factor P (191 aa).

Position 34 is an N6-(3,6-diaminohexanoyl)-5-hydroxylysine (Lys-34).

This sequence belongs to the elongation factor P family. May be beta-lysylated on the epsilon-amino group of Lys-34 by the combined action of EpmA and EpmB, and then hydroxylated on the C5 position of the same residue by EpmC (if this protein is present). Lysylation is critical for the stimulatory effect of EF-P on peptide-bond formation. The lysylation moiety may extend toward the peptidyltransferase center and stabilize the terminal 3-CCA end of the tRNA. Hydroxylation of the C5 position on Lys-34 may allow additional potential stabilizing hydrogen-bond interactions with the P-tRNA.

Its subcellular location is the cytoplasm. It functions in the pathway protein biosynthesis; polypeptide chain elongation. Involved in peptide bond synthesis. Alleviates ribosome stalling that occurs when 3 or more consecutive Pro residues or the sequence PPG is present in a protein, possibly by augmenting the peptidyl transferase activity of the ribosome. Modification of Lys-34 is required for alleviation. The polypeptide is Elongation factor P (Colwellia psychrerythraea (strain 34H / ATCC BAA-681) (Vibrio psychroerythus)).